The sequence spans 339 residues: Serpentine receptor class delta-19 (339 aa).

A run of 7 helical transmembrane segments spans residues 2–22 (IIFFEIWHWSWALLGCYLNLL), 39–59 (ATLIINFAATDFVECALDLFI), 90–110 (VGLSFLLHCLTHSVWSLLISF), 130–150 (ITIMFYIPSLVQALTYWTLFV), 187–207 (VYAVAHICLPFFPVYITIFVL), 242–262 (IIPMFLGIAVLLYFSSQSGLL), and 270–290 (SIFSVAILMPALSPITYLYFV).

It belongs to the nematode receptor-like protein srd family.

Its subcellular location is the membrane. This is Serpentine receptor class delta-19 (srd-19) from Caenorhabditis elegans.